Here is a 616-residue protein sequence, read N- to C-terminus: MPQYRSRTSTAGRNMAGARALWRATGMKDGDFEKPIIAIANSFTQFVPGHVHLKDLGQLVAREIEAAGGVAKEFNTIAVDDGIAMGHGGMLYSLPSRDLIADSVEYMVNAHTADALVCISNCDKITPGMLMAALRLNIPTIFVSGGPMEAGKVKWEAKIIPLDLVDAMVKAADKNCSDEEVDAIERSACPTCGSCSGMFTANSMNCLTEALGLSLPGNGTTLATHADREKLFREAGRRIVDLAKRYYEKDDATVLPRAIASFAAFENAISLDVAMGGSTNTVLHLLAAAKEAGVDFTMKDIDRISRHVPCLCKVAPAVPDVHIEDVHRAGGIMSILGELDRAGLLNRDVPTVHSKTLGEALGRWDIMQAHDKAVFDFFLAAPGGVPTQVAFSQNRRWNELDMDRAKGVIRNKANAFSQDGGLAVLYGNIAEKGCIVKTAGVDESIWQFTGKARVYESQEDAVEGILGEQVQAGDVVVIRYEGPKGGPGMQEMLYPTSYLKSRGLGKECALLTDGRFSGGTSGLSIGHASPEAAMGGAIALVEDGDTIEIDIPNRRIALAVSDEELARRRAAMEAKGAAAWKPANRERVVSAALQAYAALTTSADTGAVRDITQVQR.

Asp-81 serves as a coordination point for Mg(2+). Cys-122 contacts [2Fe-2S] cluster. Residues Asp-123 and Lys-124 each coordinate Mg(2+). Position 124 is an N6-carboxylysine (Lys-124). [2Fe-2S] cluster is bound at residue Cys-195. Glu-491 lines the Mg(2+) pocket. Ser-517 acts as the Proton acceptor in catalysis.

The protein belongs to the IlvD/Edd family. As to quaternary structure, homodimer. [2Fe-2S] cluster serves as cofactor. It depends on Mg(2+) as a cofactor.

The catalysed reaction is (2R)-2,3-dihydroxy-3-methylbutanoate = 3-methyl-2-oxobutanoate + H2O. It catalyses the reaction (2R,3R)-2,3-dihydroxy-3-methylpentanoate = (S)-3-methyl-2-oxopentanoate + H2O. It participates in amino-acid biosynthesis; L-isoleucine biosynthesis; L-isoleucine from 2-oxobutanoate: step 3/4. It functions in the pathway amino-acid biosynthesis; L-valine biosynthesis; L-valine from pyruvate: step 3/4. In terms of biological role, functions in the biosynthesis of branched-chain amino acids. Catalyzes the dehydration of (2R,3R)-2,3-dihydroxy-3-methylpentanoate (2,3-dihydroxy-3-methylvalerate) into 2-oxo-3-methylpentanoate (2-oxo-3-methylvalerate) and of (2R)-2,3-dihydroxy-3-methylbutanoate (2,3-dihydroxyisovalerate) into 2-oxo-3-methylbutanoate (2-oxoisovalerate), the penultimate precursor to L-isoleucine and L-valine, respectively. The chain is Dihydroxy-acid dehydratase from Azoarcus sp. (strain BH72).